The primary structure comprises 159 residues: Alpha-lactalbumin (159 aa).

The signal sequence occupies residues 1 to 19; sequence MMRFVPLFLACISLPAFQA. The region spanning 20–142 is the C-type lysozyme domain; it reads TEFTKCEVSH…KLEQWRCEKP (123 aa). 4 disulfides stabilise this stretch: Cys25/Cys139, Cys47/Cys130, Cys80/Cys96, and Cys92/Cys110. Asn64 is a glycosylation site (N-linked (GlcNAc...) asparagine). 4 residues coordinate Ca(2+): Lys98, Asp101, Asp106, and Asp107.

This sequence belongs to the glycosyl hydrolase 22 family. As to quaternary structure, lactose synthase (LS) is a heterodimer of a catalytic component, beta1,4-galactosyltransferase (beta4Gal-T1) and a regulatory component, alpha-lactalbumin (LA). Mammary gland specific. Secreted in milk.

Its subcellular location is the secreted. In terms of biological role, regulatory subunit of lactose synthase, changes the substrate specificity of galactosyltransferase in the mammary gland making glucose a good acceptor substrate for this enzyme. This enables LS to synthesize lactose, the major carbohydrate component of milk. In other tissues, galactosyltransferase transfers galactose onto the N-acetylglucosamine of the oligosaccharide chains in glycoproteins. The protein is Alpha-lactalbumin (Lalba) of Rattus norvegicus (Rat).